Reading from the N-terminus, the 259-residue chain is Bacillaene synthase dehydratase PksH (259 aa).

Catalysis depends on residues D68 and E137.

Belongs to the enoyl-CoA hydratase/isomerase family.

The protein resides in the cytoplasm. It functions in the pathway antibiotic biosynthesis; bacillaene biosynthesis. In terms of biological role, involved in some intermediate steps for the synthesis of the antibiotic polyketide bacillaene which is involved in secondary metabolism. Catalyzes the dehydration of the (S)-3-hydroxy-3-methylglutaryl group tethered to PksL to a 3-methylglutaconyl moiety. This Bacillus subtilis (strain 168) protein is Bacillaene synthase dehydratase PksH (pksH).